The following is a 726-amino-acid chain: Quinolinate synthase, chloroplastic (726 aa).

The transit peptide at 1-67 (MDAANLVMKS…KKPSNNSTFT (67 aa)) directs the protein to the chloroplast. Cysteine 133 functions as the Cysteine persulfide intermediate in the catalytic mechanism. 2 residues coordinate iminosuccinate: histidine 283 and serine 309. A [4Fe-4S] cluster-binding site is contributed by cysteine 363. Residues 392 to 394 (YIN) and serine 414 each bind iminosuccinate. Cysteine 487 is a binding site for [4Fe-4S] cluster. Iminosuccinate-binding positions include 513–515 (HFE) and threonine 538. A [4Fe-4S] cluster-binding site is contributed by cysteine 643.

Belongs to the quinolinate synthase family. Type 1 subfamily. Homodimer. The cofactor is [4Fe-4S] cluster.

The protein localises to the plastid. The protein resides in the chloroplast. It catalyses the reaction iminosuccinate + dihydroxyacetone phosphate = quinolinate + phosphate + 2 H2O + H(+). Its pathway is alkaloid biosynthesis; nicotine biosynthesis. The protein operates within cofactor biosynthesis; NAD(+) biosynthesis; quinolinate from iminoaspartate: step 1/1. Its function is as follows. Involved in the biosynthesis of pyridine alkaloid natural products, leading mainly to the production of anabasine, anatabine, nicotine and nornicotine, effective deterrents against herbivores with antiparasitic and pesticide properties (neurotoxins); nornicotine serves as the precursor in the synthesis of the carcinogen compound N'-nitrosonornicotine (NNN). Catalyzes the condensation of iminoaspartate with dihydroxyacetone phosphate to form quinolinate. The chain is Quinolinate synthase, chloroplastic from Nicotiana tabacum (Common tobacco).